The primary structure comprises 245 residues: Ribonuclease PH (245 aa).

Residues Arg93 and 131 to 133 (GTR) contribute to the phosphate site.

The protein belongs to the RNase PH family. As to quaternary structure, homohexameric ring arranged as a trimer of dimers.

The enzyme catalyses tRNA(n+1) + phosphate = tRNA(n) + a ribonucleoside 5'-diphosphate. Functionally, phosphorolytic 3'-5' exoribonuclease that plays an important role in tRNA 3'-end maturation. Removes nucleotide residues following the 3'-CCA terminus of tRNAs; can also add nucleotides to the ends of RNA molecules by using nucleoside diphosphates as substrates, but this may not be physiologically important. Probably plays a role in initiation of 16S rRNA degradation (leading to ribosome degradation) during starvation. In Corynebacterium glutamicum (strain R), this protein is Ribonuclease PH.